Reading from the N-terminus, the 246-residue chain is Ureidoacrylate amidohydrolase RutB (246 aa).

The tract at residues Met1–Pro27 is disordered. Residue Asp41 is the Proton acceptor of the active site. The active site involves Lys150. Cys183 acts as the Nucleophile in catalysis.

It belongs to the isochorismatase family. RutB subfamily.

The enzyme catalyses (Z)-3-ureidoacrylate + H2O + H(+) = (Z)-3-aminoacrylate + NH4(+) + CO2. It carries out the reaction (Z)-3-ureidoacrylate + H2O = (Z)-3-aminoacrylate + carbamate + H(+). It catalyses the reaction (Z)-2-methylureidoacrylate + H2O + H(+) = (Z)-2-methylaminoacrylate + NH4(+) + CO2. Functionally, hydrolyzes ureidoacrylate to form aminoacrylate and carbamate. The carbamate hydrolyzes spontaneously, thereby releasing one of the nitrogen atoms of the pyrimidine ring as ammonia and one of its carbon atoms as CO2. In Rhizobium rhizogenes (strain K84 / ATCC BAA-868) (Agrobacterium radiobacter), this protein is Ureidoacrylate amidohydrolase RutB.